The chain runs to 1087 residues: Error-prone DNA polymerase 2 (1087 aa).

The disordered stretch occupies residues 1033 to 1064 (DGAFRPPTGRGDEFAHGSPGSADSRGKAPPGV).

It belongs to the DNA polymerase type-C family. DnaE2 subfamily.

The protein localises to the cytoplasm. It catalyses the reaction DNA(n) + a 2'-deoxyribonucleoside 5'-triphosphate = DNA(n+1) + diphosphate. In terms of biological role, DNA polymerase involved in damage-induced mutagenesis and translesion synthesis (TLS). It is not the major replicative DNA polymerase. The protein is Error-prone DNA polymerase 2 of Rhizobium meliloti (strain 1021) (Ensifer meliloti).